Reading from the N-terminus, the 112-residue chain is uncharacterized protein (112 aa).

A compositionally biased stretch (polar residues) spans 1–11 (MAESVASSESL). A disordered region spans residues 1-32 (MAESVASSESLPQMKPEEPESKKSPSREAIPK). A compositionally biased stretch (basic and acidic residues) spans 15 to 31 (KPEEPESKKSPSREAIP). Residues 81–101 (VVFIFMIAIMSMLVIGLVVCG) traverse the membrane as a helical segment.

The protein resides in the membrane. This is an uncharacterized protein from Encephalitozoon cuniculi (strain GB-M1) (Microsporidian parasite).